A 798-amino-acid chain; its full sequence is MAMNTLQKLCVVCSKCNECAMDVECLKYCDPNIVSMDSTAFRRNGVMVIHLYRTLYPALVSQNAVQTSVLTLYMEMLLQGLYDTMREIDMALTDFGTHRDRQRYYRRVLKLDSCNRHESITITFAPELALTIDLATLNDVERLLCKINCVYGAVDASQGVAVCRRLLSLLARLCDICPVAGPEIYRETVTCFQCYEELMAVPNQGRSINRRMQGLLCDHITIKKVLVQLDMDAQAVEQDMGDIAIRAPSVKGIIRAIKSLASFSPASYAYINDAEEALRGYNLFSEIPDRIYSLSDYTYWSKTSEAIVRHVGITMRQLNVSHSLWKTLRTELSRYHYGEDLEDVFTLGEGRFGGDERIYVGSIFAAPGKVVDMITSMSIKSFENNPLFNRLHESNEIYAKIKSLIEEIRGVGDGPAAGAARSRAEAASGAGAGGEEGAGAAAGRGNTGGDEGAGTTTAMSSALECGDPLLRVHDVNKEVNVRKRAYLKKVSEMGYNKVMACIRNQEHLVTKLVNVNLVGTVCLEAVSKIMNGFLSRQRSITEAETYPDVAESLGYDEHLYVINNLVHKRLPSELLPQLGQQIYRFINGPMFTHYLDRHPLPYNVNMAYACDNAGILPHVKEDLVRCADGTVVPSDWMTVGYMGFFRFADIRELNDLQKMVWAHIRELVLSVALYNETFGKQLALWRVEDGDEIGDGIILTYNPESPLILRRGDRSYRSRDLYLLLYKHLSVDSETLADAGSRASVADLCQVERPGPIAEQRSSTQNVKKKRKRMSLLELVRDVDGAGGDDLVPPCLYK.

The C3H1-type zinc finger occupies 191-219; the sequence is CFQCYEELMAVPNQGRSINRRMQGLLCDH. Residues 416–429 show a composition bias toward low complexity; sequence AAGAARSRAEAASG. The tract at residues 416–458 is disordered; sequence AAGAARSRAEAASGAGAGGEEGAGAAAGRGNTGGDEGAGTTTA. Residues 430-452 are compositionally biased toward gly residues; sequence AGAGGEEGAGAAAGRGNTGGDEG. ATP is bound at residue 674–681; that stretch reads YNETFGKQ.

It belongs to the herpesviridae TRM1 protein family. In terms of assembly, associates with TRM2 and TRM3 to form the tripartite terminase complex. Interacts with portal protein.

It localises to the host nucleus. Functionally, component of the molecular motor that translocates viral genomic DNA in empty capsid during DNA packaging. Forms a tripartite terminase complex together with TRM2 and TRM3 in the host cytoplasm. Once the complex reaches the host nucleus, it interacts with the capsid portal vertex. This portal forms a ring in which genomic DNA is translocated into the capsid. TRM1 carries an endonuclease activity that plays an important role for the cleavage of concatemeric viral DNA into unit length genomes. The protein is Tripartite terminase subunit 1 of Murid herpesvirus 1 (strain Smith) (MuHV-1).